Reading from the N-terminus, the 795-residue chain is Mitochondrial intermediate peptidase (795 aa).

The N-terminal 22 residues, 1-22 (MLKTLNRRSWTCRQCIRILRRN), are a transit peptide targeting the mitochondrion. Zn(2+) is bound at residue His-561. Residue Glu-562 is part of the active site. Residues His-565 and His-568 each contribute to the Zn(2+) site.

The protein belongs to the peptidase M3 family. Requires Zn(2+) as cofactor.

Its subcellular location is the mitochondrion matrix. It carries out the reaction Release of an N-terminal octapeptide as second stage of processing of some proteins imported into the mitochondrion.. Its function is as follows. Cleaves proteins, imported into the mitochondrion, to their mature size. While most mitochondrial precursor proteins are processed to the mature form in one step by mitochondrial processing peptidase (MPP), the sequential cleavage by MIP of an octapeptide after initial processing by MPP is a required step for a subgroup of nuclear-encoded precursor proteins destined for the matrix or the inner membrane. The chain is Mitochondrial intermediate peptidase (OCT1) from Coccidioides immitis (strain RS) (Valley fever fungus).